We begin with the raw amino-acid sequence, 314 residues long: Putative S-adenosyl-L-methionine-dependent methyltransferase MAP_4191c (314 aa).

S-adenosyl-L-methionine is bound by residues D138 and 167–168; that span reads DL.

It belongs to the UPF0677 family.

In terms of biological role, exhibits S-adenosyl-L-methionine-dependent methyltransferase activity. This chain is Putative S-adenosyl-L-methionine-dependent methyltransferase MAP_4191c, found in Mycolicibacterium paratuberculosis (strain ATCC BAA-968 / K-10) (Mycobacterium paratuberculosis).